Here is a 240-residue protein sequence, read N- to C-terminus: Uridylate kinase (240 aa).

Lys13–Gly16 contacts ATP. Residue Gly55 coordinates UMP. Gly56 and Arg60 together coordinate ATP. UMP-binding positions include Asp76 and Thr137–Thr144. The ATP site is built by Thr164, Tyr170, and Asp173.

This sequence belongs to the UMP kinase family. As to quaternary structure, homohexamer.

The protein resides in the cytoplasm. The enzyme catalyses UMP + ATP = UDP + ADP. The protein operates within pyrimidine metabolism; CTP biosynthesis via de novo pathway; UDP from UMP (UMPK route): step 1/1. Inhibited by UTP. Its function is as follows. Catalyzes the reversible phosphorylation of UMP to UDP. This is Uridylate kinase from Helicobacter pylori (strain HPAG1).